Reading from the N-terminus, the 249-residue chain is Probable transcriptional regulatory protein LBJ_0543 (249 aa).

It belongs to the TACO1 family.

The protein resides in the cytoplasm. The chain is Probable transcriptional regulatory protein LBJ_0543 from Leptospira borgpetersenii serovar Hardjo-bovis (strain JB197).